The primary structure comprises 610 residues: Manganese lipoxygenase (610 aa).

A signal peptide spans 1 to 16 (MVALLIFLGIFTCVET). Positions 47–610 (FTLPNEDDEI…PGVIPFYLSV (564 aa)) constitute a Lipoxygenase domain. 2 N-linked (GlcNAc...) asparagine glycosylation sites follow: Asn-157 and Asn-259. Positions 290 and 295 each coordinate Mn(2+). An N-linked (GlcNAc...) asparagine glycan is attached at Asn-386. Mn(2+)-binding residues include His-475 and Asn-479. An N-linked (GlcNAc...) asparagine glycan is attached at Asn-540. Val-610 is a Mn(2+) binding site.

Belongs to the lipoxygenase family. Manganese lipoxygenase subfamily. Mn(2+) serves as cofactor. N- and O-glycosylated.

The protein localises to the secreted. It catalyses the reaction (9Z,12Z)-octadecadienoate + O2 = (11S)-hydroperoxy-(9Z,12Z)-octadecadienoate. It carries out the reaction (9Z,12Z)-octadecadienoate + O2 = (11R)-hydroperoxy-(9Z,12Z)-octadecadienoate. The enzyme catalyses (9Z,12Z)-octadecadienoate + O2 = (13S)-hydroperoxy-(9Z,11E)-octadecadienoate. The catalysed reaction is (9Z,12Z,15Z)-octadecatrienoate + O2 = (11S)-hydroperoxy-(9Z,12Z,15Z)-octadecatrienoate. In terms of biological role, lipoxygenase that metabolizes linoleic and alpha-linolenic acids to 9-, 11- and 13-hydroperoxy fatty acids. Oxidizes linoleic acid to mainly 11R-, 13S- and racemic 9-HPODE, and alpha-linolenic acid to 11-HPOTrE. The chain is Manganese lipoxygenase from Fusarium oxysporum (strain Fo5176) (Fusarium vascular wilt).